The chain runs to 396 residues: S-adenosylmethionine synthase (396 aa).

Histidine 16 is an ATP binding site. Residue aspartate 18 coordinates Mg(2+). Position 44 (glutamate 44) interacts with K(+). L-methionine-binding residues include glutamate 57 and glutamine 100. Positions 100 to 110 are flexible loop; the sequence is QSKDIALGVDK. Residues 176 to 178, 243 to 244, aspartate 252, 258 to 259, alanine 275, and lysine 279 each bind ATP; these read DGK, RF, and RK. An L-methionine-binding site is contributed by aspartate 252. Lysine 283 serves as a coordination point for L-methionine.

This sequence belongs to the AdoMet synthase family. As to quaternary structure, homotetramer; dimer of dimers. Requires Mg(2+) as cofactor. It depends on K(+) as a cofactor.

The protein localises to the cytoplasm. The catalysed reaction is L-methionine + ATP + H2O = S-adenosyl-L-methionine + phosphate + diphosphate. It functions in the pathway amino-acid biosynthesis; S-adenosyl-L-methionine biosynthesis; S-adenosyl-L-methionine from L-methionine: step 1/1. Its function is as follows. Catalyzes the formation of S-adenosylmethionine (AdoMet) from methionine and ATP. The overall synthetic reaction is composed of two sequential steps, AdoMet formation and the subsequent tripolyphosphate hydrolysis which occurs prior to release of AdoMet from the enzyme. The protein is S-adenosylmethionine synthase of Lachnoclostridium phytofermentans (strain ATCC 700394 / DSM 18823 / ISDg) (Clostridium phytofermentans).